Consider the following 100-residue polypeptide: Putative protein adenylyltransferase MJ0604 (100 aa).

A GSX(10)DXD motif motif is present at residues 29–43 (GSYARGDYTEESDID). Mg(2+)-binding residues include D41 and D43.

This sequence belongs to the MntA antitoxin family. Requires Mg(2+) as cofactor.

The enzyme catalyses L-tyrosyl-[protein] + ATP = O-(5'-adenylyl)-L-tyrosyl-[protein] + diphosphate. The catalysed reaction is O-(5'-adenylyl)-L-tyrosyl-[protein] + ATP = O-[5'-(adenylyl-(5'-&gt;3')-adenylyl)]-L-tyrosyl-[protein] + diphosphate. In terms of biological role, putative antitoxin component of a putative type VII toxin-antitoxin (TA) system. Its cognate toxin might be MJ0605, which it might AMPylate. In Methanocaldococcus jannaschii (strain ATCC 43067 / DSM 2661 / JAL-1 / JCM 10045 / NBRC 100440) (Methanococcus jannaschii), this protein is Putative protein adenylyltransferase MJ0604.